We begin with the raw amino-acid sequence, 189 residues long: Elongation factor P (189 aa).

The protein belongs to the elongation factor P family.

It localises to the cytoplasm. Its pathway is protein biosynthesis; polypeptide chain elongation. In terms of biological role, involved in peptide bond synthesis. Stimulates efficient translation and peptide-bond synthesis on native or reconstituted 70S ribosomes in vitro. Probably functions indirectly by altering the affinity of the ribosome for aminoacyl-tRNA, thus increasing their reactivity as acceptors for peptidyl transferase. The sequence is that of Elongation factor P from Pseudomonas fluorescens (strain Pf0-1).